The chain runs to 128 residues: UPF0325 protein CKO_03204 (128 aa).

The protein belongs to the UPF0325 family.

This is UPF0325 protein CKO_03204 from Citrobacter koseri (strain ATCC BAA-895 / CDC 4225-83 / SGSC4696).